Consider the following 204-residue polypeptide: High frequency lysogenization protein HflD homolog (204 aa).

The protein belongs to the HflD family.

The protein resides in the cytoplasm. It localises to the cell inner membrane. This Xanthomonas axonopodis pv. citri (strain 306) protein is High frequency lysogenization protein HflD homolog.